The chain runs to 411 residues: Lysosome-associated membrane glycoprotein 2 (411 aa).

The first 26 residues, 1–26 (MRLLSPVTGSKLVLLFLFLGAVRSDA), serve as a signal peptide directing secretion. The tract at residues 27-188 (LKLNLTDSKG…SKHEQVCKED (162 aa)) is first lumenal domain. The Lumenal segment spans residues 27–376 (LKLNLTDSKG…QDCSADEDNF (350 aa)). Cys38 and Cys75 are disulfide-bonded. Residues Asn46, Asn57, Asn71, Asn97, Asn109, Asn117, Asn175, Asn223, Asn230, Asn243, Asn261, Asn276, Asn308, Asn318, and Asn357 are each glycosylated (N-linked (GlcNAc...) asparagine). Residues Cys149 and Cys185 are joined by a disulfide bond. A hinge region spans residues 189–229 (KTATTVAPIIHTTVPSPTTTLTPTSIPVPTPTVGNYTISNG). A second lumenal domain region spans residues 230–376 (NATCLLATMG…QDCSADEDNF (147 aa)). A disulfide bridge connects residues Cys233 and Cys266. A disulfide bridge connects residues Cys332 and Cys369. Residues 377-400 (LVPIAVGAALGGVLILVLLAYFIG) form a helical membrane-spanning segment. Residues 401–411 (LKRHHTGYEQF) are Cytoplasmic-facing. An important for binding and subsequent lysosomal degradation of target proteins region spans residues 402–405 (KRHH).

The protein belongs to the LAMP family. Monomer. Forms large homooligomers. Interacts (via its cytoplasmic region) with HSPA8; HSPA8 mediates recruitment of proteins with a KFERQ motif to the surface of the lysosome for chaperone-mediated autophagy. Interacts with HSP90 in the lysosome lumen; this enhances LAMP2 stability. Interacts with MLLT11. Interacts with ABCB9. Interacts with FURIN. Interacts with CT55; this interaction may be important for LAMP2 protein stability. Interacts with TMEM175; inhibiting the proton channel activity of TMEM175. Forms a ternary complex with RAB7A and RUFY4 (via RUN domain); the interaction with RAB7A is mediated by RUFY4 (via RUN and coiled coil domains). Post-translationally, extensively N-glycosylated. Contains a minor proportion of O-linked glycans. Contains sialylated glycans. Detected in liver, kidney, spleen and macrophages (at protein level).

The protein localises to the lysosome membrane. Its subcellular location is the endosome membrane. It is found in the cell membrane. It localises to the cytoplasmic vesicle. The protein resides in the autophagosome membrane. Lysosomal membrane glycoprotein which plays an important role in lysosome biogenesis, lysosomal pH regulation and autophagy. Acts as an important regulator of lysosomal lumen pH regulation by acting as a direct inhibitor of the proton channel TMEM175, facilitating lysosomal acidification for optimal hydrolase activity. Plays an important role in chaperone-mediated autophagy, a process that mediates lysosomal degradation of proteins in response to various stresses and as part of the normal turnover of proteins with a long biological half-live. Functions by binding target proteins, such as GAPDH, NLRP3 and MLLT11, and targeting them for lysosomal degradation. In the chaperone-mediated autophagy, acts downstream of chaperones, such as HSPA8/HSC70, which recognize and bind substrate proteins and mediate their recruitment to lysosomes, where target proteins bind LAMP2. Plays a role in lysosomal protein degradation in response to starvation. Required for the fusion of autophagosomes with lysosomes during autophagy. Cells that lack LAMP2 express normal levels of VAMP8, but fail to accumulate STX17 on autophagosomes, which is the most likely explanation for the lack of fusion between autophagosomes and lysosomes. Required for normal degradation of the contents of autophagosomes. Required for efficient MHC class II-mediated presentation of exogenous antigens via its function in lysosomal protein degradation; antigenic peptides generated by proteases in the endosomal/lysosomal compartment are captured by nascent MHC II subunits. Is not required for efficient MHC class II-mediated presentation of endogenous antigens. In Rattus norvegicus (Rat), this protein is Lysosome-associated membrane glycoprotein 2 (Lamp2).